The chain runs to 344 residues: MSTSRSDALKAEADRSDNDVEKLLRPQSLDEFVGQEKIKENLNVFMKAALQRGETLDHVLLSGPPGLGKTTLAHIIANEMGARIRTSSGPVLEKPADIAGVLTNLEEGDLLFIDEIHRLSSVVEEYLYSAMEDYRIDIVIDQGPNARTVQIDLPPFTMVGATTRKGLLTAPLRARFGIDFRYDYYTADLLQEITQRSARILDVETTPDGAYEIARRSRGTPRVANRLLRRTRDFAEVEGDGEITKAIADRALNALDVDEEGLDDMDARILLTLIDNFDGGPTGLKNLAVSVGEESGTLEEVYEPYLIQEGFMERTPQGRVALQRAYDHFDRSSPAADQDLFDQE.

The large ATPase domain (RuvB-L) stretch occupies residues 1 to 185 (MSTSRSDALK…FGIDFRYDYY (185 aa)). Residues leucine 24, arginine 25, glycine 66, lysine 69, threonine 70, threonine 71, 132-134 (EDY), arginine 175, tyrosine 185, and arginine 222 each bind ATP. Threonine 70 is a Mg(2+) binding site. Residues 186 to 256 (TADLLQEITQ…IADRALNALD (71 aa)) form a small ATPAse domain (RuvB-S) region. The tract at residues 259–344 (EEGLDDMDAR…AADQDLFDQE (86 aa)) is head domain (RuvB-H). DNA is bound by residues arginine 314 and arginine 319.

The protein belongs to the RuvB family. As to quaternary structure, homohexamer. Forms an RuvA(8)-RuvB(12)-Holliday junction (HJ) complex. HJ DNA is sandwiched between 2 RuvA tetramers; dsDNA enters through RuvA and exits via RuvB. An RuvB hexamer assembles on each DNA strand where it exits the tetramer. Each RuvB hexamer is contacted by two RuvA subunits (via domain III) on 2 adjacent RuvB subunits; this complex drives branch migration. In the full resolvosome a probable DNA-RuvA(4)-RuvB(12)-RuvC(2) complex forms which resolves the HJ.

The protein resides in the cytoplasm. The catalysed reaction is ATP + H2O = ADP + phosphate + H(+). In terms of biological role, the RuvA-RuvB-RuvC complex processes Holliday junction (HJ) DNA during genetic recombination and DNA repair, while the RuvA-RuvB complex plays an important role in the rescue of blocked DNA replication forks via replication fork reversal (RFR). RuvA specifically binds to HJ cruciform DNA, conferring on it an open structure. The RuvB hexamer acts as an ATP-dependent pump, pulling dsDNA into and through the RuvAB complex. RuvB forms 2 homohexamers on either side of HJ DNA bound by 1 or 2 RuvA tetramers; 4 subunits per hexamer contact DNA at a time. Coordinated motions by a converter formed by DNA-disengaged RuvB subunits stimulates ATP hydrolysis and nucleotide exchange. Immobilization of the converter enables RuvB to convert the ATP-contained energy into a lever motion, pulling 2 nucleotides of DNA out of the RuvA tetramer per ATP hydrolyzed, thus driving DNA branch migration. The RuvB motors rotate together with the DNA substrate, which together with the progressing nucleotide cycle form the mechanistic basis for DNA recombination by continuous HJ branch migration. Branch migration allows RuvC to scan DNA until it finds its consensus sequence, where it cleaves and resolves cruciform DNA. The chain is Holliday junction branch migration complex subunit RuvB from Salinibacter ruber (strain DSM 13855 / M31).